The primary structure comprises 3912 residues: Ubiquitin carboxyl-terminal hydrolase puf (3912 aa).

Disordered regions lie at residues alanine 101–histidine 172, asparagine 518–glutamate 590, aspartate 660–aspartate 688, valine 851–serine 878, and serine 1491–serine 1611. Residues glutamate 106–proline 133 show a composition bias toward basic and acidic residues. Residues serine 134–glycine 143 are compositionally biased toward low complexity. Positions lysine 150–threonine 164 are enriched in pro residues. Residues serine 522–serine 532 are compositionally biased toward low complexity. The segment covering isoleucine 576–lysine 585 has biased composition (basic and acidic residues). Over residues aspartate 660–serine 687 the composition is skewed to acidic residues. Residues lysine 862–glutamine 876 are compositionally biased toward polar residues. The span at valine 1511 to arginine 1520 shows a compositional bias: basic residues. The segment covering threonine 1550–glycine 1567 has biased composition (polar residues). The span at lysine 1583–proline 1594 shows a compositional bias: basic and acidic residues. Residues proline 1600 to alanine 1609 show a composition bias toward pro residues. One can recognise a USP domain in the interval valine 2015–arginine 2380. Residue cysteine 2024 is the Nucleophile of the active site. Over residues tyrosine 2249–alanine 2263 the composition is skewed to basic and acidic residues. A disordered region spans residues tyrosine 2249–lysine 2274. Residue histidine 2305 is the Proton acceptor of the active site. 4 disordered regions span residues glutamate 2391–alanine 2529, glutamine 3322–glutamine 3344, serine 3657–glutamate 3776, and alanine 3800–isoleucine 3912. Composition is skewed to basic and acidic residues over residues valine 2402–lysine 2413 and glutamate 2433–threonine 2488. Residues asparagine 2504–glutamine 2523 are compositionally biased toward low complexity. The segment covering serine 3657–serine 3703 has biased composition (basic and acidic residues). Residues serine 3706 to lysine 3721 show a composition bias toward polar residues. Positions serine 3741–leucine 3751 are enriched in acidic residues. Over residues threonine 3766–glutamate 3776 the composition is skewed to basic and acidic residues. A compositionally biased stretch (polar residues) spans proline 3865–glutamate 3877. The span at serine 3878–isoleucine 3912 shows a compositional bias: low complexity.

The protein belongs to the peptidase C19 family. As to quaternary structure, interacts with Myc and ago.

The protein resides in the nucleus. The catalysed reaction is Thiol-dependent hydrolysis of ester, thioester, amide, peptide and isopeptide bonds formed by the C-terminal Gly of ubiquitin (a 76-residue protein attached to proteins as an intracellular targeting signal).. In terms of biological role, ubiquitin hydrolase that can remove conjugated ubiquitin from target proteins and polyubiquitin chains. Essential for Myc-mediated cell growth and proliferation in developing eyes and wings. In the wing and eye, the deubiquitinating activity acts as an antagonist to the SCF E3 ubiquitin-protein ligase member archipelago (ago) to regulate Myc and CycE stability and thus control cell growth and proliferation. Also appears to regulate ago by modulating its induction by Myc. May also promote cell apoptosis in the wing imaginal disk, acting in an apoptotic pathway that appears to be largely independent of Myc. Required for preventing the activation of the immune deficiency (Imd) and Toll signaling cascades under unchallenged conditions. Also appears to be involved in modulating the differential expression of certain antimicrobial peptides (AMP) in response to infection by either Gram-positive or Gram-negative bacteria. Involved in the regulation of DNA damage repair pathways, including euchromatic site-specific double strand break (DSB) repair. This Drosophila melanogaster (Fruit fly) protein is Ubiquitin carboxyl-terminal hydrolase puf.